The following is a 97-amino-acid chain: MRKYEIMCLISPELSEEDFKTLYEGIQQDIQNLGGEVQNVDVWGKRTLAYPVKKFTEGYYVVMNFLFPQTQLPEFERRLKLREKLLRYMITLLEKEE.

It belongs to the bacterial ribosomal protein bS6 family.

Binds together with bS18 to 16S ribosomal RNA. This chain is Small ribosomal subunit protein bS6, found in Dictyoglomus turgidum (strain DSM 6724 / Z-1310).